The chain runs to 248 residues: Metallo-beta-lactamase type 2 (248 aa).

Residues 1-21 form the signal peptide; that stretch reads MKRLKGLLVLALGFTGLQVFG. Residues histidine 97, histidine 99, aspartate 101, histidine 160, and cysteine 179 each contribute to the Zn(2+) site. Lysine 182 serves as a coordination point for substrate. Histidine 221 contacts Zn(2+).

Belongs to the metallo-beta-lactamase superfamily. Class-B beta-lactamase family. Monomer. Zn(2+) is required as a cofactor.

Its subcellular location is the periplasm. It carries out the reaction a beta-lactam + H2O = a substituted beta-amino acid. Its function is as follows. Confers resistance to the different beta-lactams antibiotics (penicillin, cephalosporin and carbapenem) via the hydrolysis of the beta-lactam ring. The sequence is that of Metallo-beta-lactamase type 2 (blaB6) from Elizabethkingia meningoseptica (Chryseobacterium meningosepticum).